We begin with the raw amino-acid sequence, 184 residues long: F(420)H(2) dehydrogenase subunit B (184 aa).

Residues 1–20 (MGEVKETKTNNSKENPEEEV) are disordered. Residues Cys61, Cys62, Cys126, and Cys156 each coordinate [4Fe-4S] cluster.

Belongs to the complex I 20 kDa subunit family. The FPO complex is composed of at least 13 different subunits. FAD is required as a cofactor. The cofactor is [4Fe-4S] cluster.

It localises to the cell inner membrane. The catalysed reaction is methanophenazine + reduced coenzyme F420-(gamma-L-Glu)(n) = dihydromethanophenazine + oxidized coenzyme F420-(gamma-L-Glu)(n) + H(+). In terms of biological role, component of the F(420)H(2) dehydrogenase (FPO complex) which is part of the energy-conserving F(420)H(2):heterodisulfide oxidoreductase system. The membrane-bound electron transfer system of the complex plays an important role in the metabolism of methylotrophic methanogens when the organisms grow on methanol or methylamines. Catalyzes the oxidation of methanophenazine to dihydromethanophenazine. It shuttles electrons from F(420)H(2), via FAD and iron-sulfur (Fe-S) centers, to methanophenazine (an electron carrier in the membrane). It couples the redox reaction to proton translocation (for every two electrons transferred, two hydrogen ions are translocated across the cytoplasmic membrane), and thus conserves the redox energy in a proton gradient. It also catalyzes the oxidation of F(420)H(2) with quinones such as 2,3-dimethyl-1,4-naphthoquinone, 2-methyl-1,4-naphthoquinone and tetramethyl-p-benzoquinone. In Methanosarcina mazei (strain ATCC BAA-159 / DSM 3647 / Goe1 / Go1 / JCM 11833 / OCM 88) (Methanosarcina frisia), this protein is F(420)H(2) dehydrogenase subunit B (fpoB).